We begin with the raw amino-acid sequence, 217 residues long: Small ribosomal subunit protein uS3 (217 aa).

The KH type-2 domain occupies 40–110 (IRDLINKGFN…EVYINIHEVR (71 aa)).

This sequence belongs to the universal ribosomal protein uS3 family. Part of the 30S ribosomal subunit. Forms a tight complex with proteins S10 and S14.

Its function is as follows. Binds the lower part of the 30S subunit head. Binds mRNA in the 70S ribosome, positioning it for translation. In Rickettsia felis (strain ATCC VR-1525 / URRWXCal2) (Rickettsia azadi), this protein is Small ribosomal subunit protein uS3.